Reading from the N-terminus, the 156-residue chain is Ribosomal RNA large subunit methyltransferase H (156 aa).

S-adenosyl-L-methionine-binding positions include Leu73, Gly104, and 123 to 128 (LSALTL).

It belongs to the RNA methyltransferase RlmH family. As to quaternary structure, homodimer.

It is found in the cytoplasm. The catalysed reaction is pseudouridine(1915) in 23S rRNA + S-adenosyl-L-methionine = N(3)-methylpseudouridine(1915) in 23S rRNA + S-adenosyl-L-homocysteine + H(+). Its function is as follows. Specifically methylates the pseudouridine at position 1915 (m3Psi1915) in 23S rRNA. The protein is Ribosomal RNA large subunit methyltransferase H of Shewanella frigidimarina (strain NCIMB 400).